The sequence spans 264 residues: GTP cyclohydrolase FolE2 (264 aa).

It belongs to the GTP cyclohydrolase IV family.

The catalysed reaction is GTP + H2O = 7,8-dihydroneopterin 3'-triphosphate + formate + H(+). It participates in cofactor biosynthesis; 7,8-dihydroneopterin triphosphate biosynthesis; 7,8-dihydroneopterin triphosphate from GTP: step 1/1. Its function is as follows. Converts GTP to 7,8-dihydroneopterin triphosphate. This chain is GTP cyclohydrolase FolE2, found in Ruthia magnifica subsp. Calyptogena magnifica.